Consider the following 254-residue polypeptide: Probable glucose-1-phosphate cytidylyltransferase (254 aa).

Residues 6-10, 11-13, lysine 23, threonine 103, arginine 108, and glycine 126 each bind substrate; these read LCGGK and GTR. Mg(2+)-binding residues include aspartate 127 and aspartate 232.

It belongs to the glucose-1-phosphate cytidylyltransferase family. It depends on Mg(2+) as a cofactor.

It carries out the reaction alpha-D-glucose 1-phosphate + CTP + H(+) = CDP-D-glucose + diphosphate. Functionally, catalyzes the transfer of a CMP moiety from CTP to glucose 1-phosphate. The sequence is that of Probable glucose-1-phosphate cytidylyltransferase (yfnH) from Bacillus subtilis (strain 168).